The following is a 24-amino-acid chain: Carboxypeptidase 1 (24 aa).

2 N-linked (GlcNAc...) asparagine glycosylation sites follow: asparagine 3 and asparagine 11.

This sequence belongs to the peptidase S10 family. Monomer. Post-translationally, contains both N- and O-linked sugar chains. The N-linked oligosaccharides are unique structures of Man(10)GlcNAc(2) and Man(11)GlcNAc(2). Deglycosylation does neither affect catalytic activity, pH, thermal stability, or resistance to proteolysis of the enzyme.

Its subcellular location is the secreted. With respect to regulation, inhibited by DFP. Its function is as follows. Removes acidic, neutral and basic amino acids as well as proline from the C-terminal position. Digests preferentially peptides containing a hydrophobic residue in P1' position, as well as arginine, lysine or phenylalanine in P1 position of ester substrate. Catalyzes also peptide synthesis. The chain is Carboxypeptidase 1 from Aspergillus niger.